A 260-amino-acid polypeptide reads, in one-letter code: UPF0246 protein APJL_0596 (260 aa).

This sequence belongs to the UPF0246 family.

The sequence is that of UPF0246 protein APJL_0596 from Actinobacillus pleuropneumoniae serotype 3 (strain JL03).